The primary structure comprises 130 residues: Small ribosomal subunit protein uS8 (130 aa).

It belongs to the universal ribosomal protein uS8 family. In terms of assembly, part of the 30S ribosomal subunit.

Functionally, one of the primary rRNA binding proteins, it binds directly to 16S rRNA central domain where it helps coordinate assembly of the platform of the 30S subunit. In Natronomonas pharaonis (strain ATCC 35678 / DSM 2160 / CIP 103997 / JCM 8858 / NBRC 14720 / NCIMB 2260 / Gabara) (Halobacterium pharaonis), this protein is Small ribosomal subunit protein uS8.